The sequence spans 290 residues: Ribosomal RNA small subunit methyltransferase A (290 aa).

6 residues coordinate S-adenosyl-L-methionine: N27, L29, G54, E75, D100, and N125.

This sequence belongs to the class I-like SAM-binding methyltransferase superfamily. rRNA adenine N(6)-methyltransferase family. RsmA subfamily.

It localises to the cytoplasm. It catalyses the reaction adenosine(1518)/adenosine(1519) in 16S rRNA + 4 S-adenosyl-L-methionine = N(6)-dimethyladenosine(1518)/N(6)-dimethyladenosine(1519) in 16S rRNA + 4 S-adenosyl-L-homocysteine + 4 H(+). Functionally, specifically dimethylates two adjacent adenosines (A1518 and A1519) in the loop of a conserved hairpin near the 3'-end of 16S rRNA in the 30S particle. May play a critical role in biogenesis of 30S subunits. The protein is Ribosomal RNA small subunit methyltransferase A of Streptococcus pneumoniae (strain CGSP14).